The primary structure comprises 333 residues: tRNA N6-adenosine threonylcarbamoyltransferase (333 aa).

2 residues coordinate Fe cation: His-111 and His-115. Substrate contacts are provided by residues 134-138, Asp-167, Gly-180, and Asn-272; that span reads LVSGG. Asp-300 is a binding site for Fe cation.

It belongs to the KAE1 / TsaD family. Requires Fe(2+) as cofactor.

The protein resides in the cytoplasm. The catalysed reaction is L-threonylcarbamoyladenylate + adenosine(37) in tRNA = N(6)-L-threonylcarbamoyladenosine(37) in tRNA + AMP + H(+). Its function is as follows. Required for the formation of a threonylcarbamoyl group on adenosine at position 37 (t(6)A37) in tRNAs that read codons beginning with adenine. Is involved in the transfer of the threonylcarbamoyl moiety of threonylcarbamoyl-AMP (TC-AMP) to the N6 group of A37, together with TsaE and TsaB. TsaD likely plays a direct catalytic role in this reaction. The polypeptide is tRNA N6-adenosine threonylcarbamoyltransferase (Legionella pneumophila (strain Lens)).